The chain runs to 444 residues: MSEMTPREIVSELDKHIIGQDAAKRSVAIALRNRWRRMQLNEELRHEVTPKNILMIGPTGVGKTEIARRLAKLANAPFIKVEATKFTEVGYVGKEVDSIIRDLTDAAIKMVRMQSIDKNRYRAEELAEERVLDVLIPPAKNNWGQAEQPQEPSAARQAFRKKLREGQLDDKEIEIDLAAAPMGVEIMSPPGMEEMTSQLQSMFQNLGGQKQKPRKLKIKDAMKLLIEEEAAKLVNPEELKQEAIDAVEQHGIVFIDEIDKICKRGGNSSGPDVSREGVQRDLLPLVEGCTVSTKHGMVKTDHILFIASGAFQVASPSDLIPELQGRLPIRVELKALTTHDFERILTEPNASITVQYKALMATEGVNIEFTEDGIKRIAQAAWQVNETTENIGARRLHTVLERLVEDISYDASEMNGQTVIIDAEYVSKHLDVLVADEDLSRFIL.

Residues I18, 60–65 (GVGKTE), D256, E322, and R394 contribute to the ATP site.

This sequence belongs to the ClpX chaperone family. HslU subfamily. In terms of assembly, a double ring-shaped homohexamer of HslV is capped on each side by a ring-shaped HslU homohexamer. The assembly of the HslU/HslV complex is dependent on binding of ATP.

The protein localises to the cytoplasm. ATPase subunit of a proteasome-like degradation complex; this subunit has chaperone activity. The binding of ATP and its subsequent hydrolysis by HslU are essential for unfolding of protein substrates subsequently hydrolyzed by HslV. HslU recognizes the N-terminal part of its protein substrates and unfolds these before they are guided to HslV for hydrolysis. The protein is ATP-dependent protease ATPase subunit HslU of Klebsiella pneumoniae (strain 342).